Here is a 396-residue protein sequence, read N- to C-terminus: NADH-quinone oxidoreductase subunit D 1 (396 aa).

Belongs to the complex I 49 kDa subunit family. In terms of assembly, NDH-1 is composed of 14 different subunits. Subunits NuoB, C, D, E, F, and G constitute the peripheral sector of the complex.

The protein localises to the cell inner membrane. The enzyme catalyses a quinone + NADH + 5 H(+)(in) = a quinol + NAD(+) + 4 H(+)(out). Its function is as follows. NDH-1 shuttles electrons from NADH, via FMN and iron-sulfur (Fe-S) centers, to quinones in the respiratory chain. The immediate electron acceptor for the enzyme in this species is believed to be ubiquinone. Couples the redox reaction to proton translocation (for every two electrons transferred, four hydrogen ions are translocated across the cytoplasmic membrane), and thus conserves the redox energy in a proton gradient. This chain is NADH-quinone oxidoreductase subunit D 1, found in Nitrobacter hamburgensis (strain DSM 10229 / NCIMB 13809 / X14).